The sequence spans 130 residues: Small ribosomal subunit protein uS9 (130 aa).

This sequence belongs to the universal ribosomal protein uS9 family.

The chain is Small ribosomal subunit protein uS9 from Polaromonas naphthalenivorans (strain CJ2).